Reading from the N-terminus, the 123-residue chain is Large ribosomal subunit protein uL29 (123 aa).

Belongs to the universal ribosomal protein uL29 family.

In Theileria parva (East coast fever infection agent), this protein is Large ribosomal subunit protein uL29 (RPL35).